The sequence spans 266 residues: Mitochondrial import inner membrane translocase subunit Tim29 (266 aa).

Residues 1–37 (MVTAALKRFWSGGHGEAGGEAGGATTVAVKPGLWTRL) constitute a mitochondrion transit peptide. Residues 38–65 (STWAGALLRDYAEACGDAAAAARARPGR) are Mitochondrial matrix-facing. Residues 66–83 (AALYVGLLGGAAACCALA) traverse the membrane as a helical segment. Residues 84 to 266 (PSEAAFEEAL…DSLVQSDVSR (183 aa)) lie on the Mitochondrial intermembrane side of the membrane.

In terms of assembly, component of the TIM22 complex, which core is composed of TIMM22, associated with TIMM10 (TIMM10A and/or TIMM10B), TIMM9, AGK and TIMM29. Interacts with TIMM10B; the interaction is direct. Interacts with TOMM40; linking the TIM22 complex to the TOM complex. Interacts with TIMM22 (when oxidized); the interaction is direct.

It localises to the mitochondrion inner membrane. Functionally, component of the TIM22 complex, a complex that mediates the import and insertion of multi-pass transmembrane proteins into the mitochondrial inner membrane. The TIM22 complex forms a twin-pore translocase that uses the membrane potential as the external driving force. Required for the stability of the TIM22 complex and functions in the assembly of the TIMM22 protein into the TIM22 complex. May facilitate cooperation between TIM22 and TOM complexes by interacting with TOMM40. This Mus musculus (Mouse) protein is Mitochondrial import inner membrane translocase subunit Tim29 (Timm29).